Reading from the N-terminus, the 535-residue chain is CTP synthase (535 aa).

The segment at 1–267 (MTKYIFVTGG…DQIVLDHFGV (267 aa)) is amidoligase domain. S13 contacts CTP. Position 13 (S13) interacts with UTP. Residue 14 to 19 (SLGKGI) coordinates ATP. Residue Y54 coordinates L-glutamine. D71 lines the ATP pocket. D71 and E141 together coordinate Mg(2+). CTP is bound by residues 148 to 150 (DIE), 188 to 193 (KTKPTQ), and K224. UTP is bound by residues 188–193 (KTKPTQ) and K224. Residues 292 to 535 (KIALVGKYVA…VAAASREVKD (244 aa)) enclose the Glutamine amidotransferase type-1 domain. An L-glutamine-binding site is contributed by G354. C381 acts as the Nucleophile; for glutamine hydrolysis in catalysis. L-glutamine is bound by residues 382–385 (LGMQ), E405, and R463. Catalysis depends on residues H508 and E510.

The protein belongs to the CTP synthase family. Homotetramer.

The catalysed reaction is UTP + L-glutamine + ATP + H2O = CTP + L-glutamate + ADP + phosphate + 2 H(+). It catalyses the reaction L-glutamine + H2O = L-glutamate + NH4(+). It carries out the reaction UTP + NH4(+) + ATP = CTP + ADP + phosphate + 2 H(+). It participates in pyrimidine metabolism; CTP biosynthesis via de novo pathway; CTP from UDP: step 2/2. Its activity is regulated as follows. Allosterically activated by GTP, when glutamine is the substrate; GTP has no effect on the reaction when ammonia is the substrate. The allosteric effector GTP functions by stabilizing the protein conformation that binds the tetrahedral intermediate(s) formed during glutamine hydrolysis. Inhibited by the product CTP, via allosteric rather than competitive inhibition. In terms of biological role, catalyzes the ATP-dependent amination of UTP to CTP with either L-glutamine or ammonia as the source of nitrogen. Regulates intracellular CTP levels through interactions with the four ribonucleotide triphosphates. The protein is CTP synthase of Levilactobacillus brevis (strain ATCC 367 / BCRC 12310 / CIP 105137 / JCM 1170 / LMG 11437 / NCIMB 947 / NCTC 947) (Lactobacillus brevis).